The following is a 484-amino-acid chain: Glycogen synthase (484 aa).

Lysine 15 is a binding site for ADP-alpha-D-glucose.

Belongs to the glycosyltransferase 1 family. Bacterial/plant glycogen synthase subfamily.

The catalysed reaction is [(1-&gt;4)-alpha-D-glucosyl](n) + ADP-alpha-D-glucose = [(1-&gt;4)-alpha-D-glucosyl](n+1) + ADP + H(+). It functions in the pathway glycan biosynthesis; glycogen biosynthesis. Synthesizes alpha-1,4-glucan chains using ADP-glucose. The sequence is that of Glycogen synthase from Anoxybacillus flavithermus (strain DSM 21510 / WK1).